The primary structure comprises 535 residues: Hrp65 protein (535 aa).

Residues 1–80 are disordered; it reads MDVKAEAPNG…GMGPRGPMKN (80 aa). Low complexity-rich tracts occupy residues 27–42 and 50–64; these read ENMNMNKNQNQNQNNN and NKRNNMNMNKNFQNR. Positions 65–74 are enriched in gly residues; it reads GGKGGPGMGP. 2 consecutive RRM domains span residues 113 to 185 and 187 to 268; these read NRLY…FAPN and TTIR…TFDH. 2 disordered regions span residues 346–411 and 429–535; these read EHET…RRQQ and QEMN…RRRY. Positions 434 to 459 are enriched in gly residues; sequence QGGGGGGGNGGNGNNQGGGGNQGGGR. A compositionally biased stretch (low complexity) spans 486-502; it reads GNQYQGNQHYQGNQDQG. Positions 521–535 are enriched in basic and acidic residues; that stretch reads DRGHRDDFQNKRRRY.

Its subcellular location is the cytoplasm. The protein resides in the cytoskeleton. It localises to the nucleus. In terms of biological role, component of nuclear connecting fibers associated with the transport of ribonucleoprotein particles from either the chromosome to the nuclear pore complex or their transient retention in the nucleoplasm. The protein is Hrp65 protein (HRP65) of Chironomus tentans (Midge).